The chain runs to 387 residues: Galactokinase (387 aa).

33–36 contributes to the substrate binding site; it reads EHID. Residues serine 67 and 124 to 130 contribute to the ATP site; that span reads GAGLSSS. Residues serine 130 and glutamate 162 each coordinate Mg(2+). Aspartate 174 functions as the Proton acceptor in the catalytic mechanism. Residue tyrosine 224 coordinates substrate.

This sequence belongs to the GHMP kinase family. GalK subfamily.

Its subcellular location is the cytoplasm. The catalysed reaction is alpha-D-galactose + ATP = alpha-D-galactose 1-phosphate + ADP + H(+). It functions in the pathway carbohydrate metabolism; galactose metabolism. Catalyzes the transfer of the gamma-phosphate of ATP to D-galactose to form alpha-D-galactose-1-phosphate (Gal-1-P). The chain is Galactokinase from Clostridium perfringens (strain 13 / Type A).